The sequence spans 412 residues: Multifunctional CCA protein (412 aa).

The ATP site is built by Gly-8 and Arg-11. Gly-8 and Arg-11 together coordinate CTP. Mg(2+)-binding residues include Asp-21 and Asp-23. Arg-91, Arg-137, and Arg-140 together coordinate ATP. CTP-binding residues include Arg-91, Arg-137, and Arg-140. The HD domain maps to 228-329 (TGIHTLMTLS…VKLFDSIDAW (102 aa)).

The protein belongs to the tRNA nucleotidyltransferase/poly(A) polymerase family. Bacterial CCA-adding enzyme type 1 subfamily. As to quaternary structure, monomer. Can also form homodimers and oligomers. The cofactor is Mg(2+). Requires Ni(2+) as cofactor.

It catalyses the reaction a tRNA precursor + 2 CTP + ATP = a tRNA with a 3' CCA end + 3 diphosphate. The catalysed reaction is a tRNA with a 3' CCA end + 2 CTP + ATP = a tRNA with a 3' CCACCA end + 3 diphosphate. Its function is as follows. Catalyzes the addition and repair of the essential 3'-terminal CCA sequence in tRNAs without using a nucleic acid template. Adds these three nucleotides in the order of C, C, and A to the tRNA nucleotide-73, using CTP and ATP as substrates and producing inorganic pyrophosphate. tRNA 3'-terminal CCA addition is required both for tRNA processing and repair. Also involved in tRNA surveillance by mediating tandem CCA addition to generate a CCACCA at the 3' terminus of unstable tRNAs. While stable tRNAs receive only 3'-terminal CCA, unstable tRNAs are marked with CCACCA and rapidly degraded. This Escherichia coli O7:K1 (strain IAI39 / ExPEC) protein is Multifunctional CCA protein.